The primary structure comprises 1444 residues: DNA polymerase III PolC-type (1444 aa).

The Exonuclease domain occupies 421–577 (YVVFDVETTG…ADAEATGYLL (157 aa)).

Belongs to the DNA polymerase type-C family. PolC subfamily.

It is found in the cytoplasm. The catalysed reaction is DNA(n) + a 2'-deoxyribonucleoside 5'-triphosphate = DNA(n+1) + diphosphate. Functionally, required for replicative DNA synthesis. This DNA polymerase also exhibits 3' to 5' exonuclease activity. This is DNA polymerase III PolC-type from Lacticaseibacillus paracasei (strain ATCC 334 / BCRC 17002 / CCUG 31169 / CIP 107868 / KCTC 3260 / NRRL B-441) (Lactobacillus paracasei).